Here is a 70-residue protein sequence, read N- to C-terminus: Ubiquinol-cytochrome c reductase complex assembly factor 5 (70 aa).

Residues 1–19 (MFTRAQVRRILQRVPGKQR) are Mitochondrial matrix-facing. The helical transmembrane segment at 20 to 41 (FGIYRFLPFFFVLGGTMEWIMI) threads the bilayer. Residues 42–70 (KVRVGQETFYDVYRRKASERQYQRRLEDE) are Mitochondrial intermembrane-facing.

It belongs to the UQCC5 family. In terms of assembly, associates with the mitochondrial ribosome. Interacts with UQCC6. Interacts with MT-CYB; interacts with newly synthesizes MT-CYB. Forms a complex, named COMB/coordinator of mitochondrial CYTB biogenesis, composed of UQCC1, UQCC2, UQCC4, UQCC5 and UQCC6; regulates MT-CYB synthesis and promotes its membrane insertion.

It localises to the mitochondrion inner membrane. In terms of biological role, required for the assembly and stability of the mitochondrial ubiquinol-cytochrome c reductase complex (complex III (CIII) or cytochrome b-c1 complex), a multisubunit transmembrane complex that is part of the mitochondrial electron transport chain (ETC) which drives oxidative phosphorylation. Mediates early complex III biogenesis. Participates in regulating the levels of electron transport chain proteins, and therefore energy supply, in response to changes in energy demand. Also involved in the first steps of cytochrome c oxidase complex (complex IV) assembly. This Homo sapiens (Human) protein is Ubiquinol-cytochrome c reductase complex assembly factor 5.